The chain runs to 532 residues: MRLAFWLYEGTALHGLSRVTNSMKNVHTVYHAPQGDDYITATYTMLERTPEFPALSISVVRGQDLARGVSRLPGTLQQVEEHYHPEVIVVAPSCSTALLQEDLSQLSMHSGVDTGKILVHDVNPFRVQEHESAEGLFTGLVKRYALEQSTTEKPSVNLLGFTSLGFHLRSDLISLRRILKTLGVEVNVVAPWGAGIEDLRNLPAGWVNVVPYHEMGPGAAHHLREKFGMPSLQGIPMGVNPTLDWIRDLLELLNVIAAEKGLPSIEMPPLTDFSLDGLSAPSGVPWFARTADMESFSGKRAFVFGDATHTVGMVKFLKDELGMQIIGAGTYLEQHADWIRDQLEGYLPVPLMVTDKFQEVAKKIEDEMPELVCGTQMERHSCRKLDVPCMVISTPTHIENHLIGYYPILGFDGADILADRVYTSCKLGLEKHLIDFFGDAGLEYEEEEPESISNGHAAAAGSEGGVPDSGEAGDAGDTDGMPWSPDAEKMLRKVPFFVRKKVRKNTENFARENGEATITAEVFKRAKEALGG.

Residue Asp36 participates in [4Fe-4S] cluster binding. Catalysis depends on Asp292, which acts as the Proton donor. 428-429 (GL) serves as a coordination point for substrate. A disordered region spans residues 445-486 (EEEEPESISNGHAAAAGSEGGVPDSGEAGDAGDTDGMPWSPD).

Belongs to the ChlB/BchB/BchZ family. In terms of assembly, protochlorophyllide reductase is composed of three subunits; BchL, BchN and BchB. Forms a heterotetramer of two BchB and two BchN subunits. [4Fe-4S] cluster serves as cofactor.

The catalysed reaction is chlorophyllide a + oxidized 2[4Fe-4S]-[ferredoxin] + 2 ADP + 2 phosphate = protochlorophyllide a + reduced 2[4Fe-4S]-[ferredoxin] + 2 ATP + 2 H2O. It participates in porphyrin-containing compound metabolism; bacteriochlorophyll biosynthesis (light-independent). Its function is as follows. Component of the dark-operative protochlorophyllide reductase (DPOR) that uses Mg-ATP and reduced ferredoxin to reduce ring D of protochlorophyllide (Pchlide) to form chlorophyllide a (Chlide). This reaction is light-independent. The NB-protein (BchN-BchB) is the catalytic component of the complex. The protein is Light-independent protochlorophyllide reductase subunit B of Chlorobium phaeobacteroides (strain BS1).